The primary structure comprises 227 residues: Cytochrome c oxidase subunit 2 (227 aa).

Topologically, residues 1 to 14 (MAYPFELGFQDATS) are mitochondrial intermembrane. The helical transmembrane segment at 15 to 45 (PIMEELLHFHDHTLMIVFLISSLVLYIISLM) threads the bilayer. Over 46-59 (LTTKLTHTSTMDAQ) the chain is Mitochondrial matrix. Residues 60 to 87 (EIETIWTILPAIILILIALPSLRILYMM) form a helical membrane-spanning segment. Residues 88 to 227 (DEINDPSLTV…HFENWSSSML (140 aa)) lie on the Mitochondrial intermembrane side of the membrane. Residues His161, Cys196, Glu198, Cys200, His204, and Met207 each coordinate Cu cation. Position 198 (Glu198) interacts with Mg(2+).

Belongs to the cytochrome c oxidase subunit 2 family. In terms of assembly, component of the cytochrome c oxidase (complex IV, CIV), a multisubunit enzyme composed of 14 subunits. The complex is composed of a catalytic core of 3 subunits MT-CO1, MT-CO2 and MT-CO3, encoded in the mitochondrial DNA, and 11 supernumerary subunits COX4I, COX5A, COX5B, COX6A, COX6B, COX6C, COX7A, COX7B, COX7C, COX8 and NDUFA4, which are encoded in the nuclear genome. The complex exists as a monomer or a dimer and forms supercomplexes (SCs) in the inner mitochondrial membrane with NADH-ubiquinone oxidoreductase (complex I, CI) and ubiquinol-cytochrome c oxidoreductase (cytochrome b-c1 complex, complex III, CIII), resulting in different assemblies (supercomplex SCI(1)III(2)IV(1) and megacomplex MCI(2)III(2)IV(2)). Found in a complex with TMEM177, COA6, COX18, COX20, SCO1 and SCO2. Interacts with TMEM177 in a COX20-dependent manner. Interacts with COX20. Interacts with COX16. Requires Cu cation as cofactor.

It localises to the mitochondrion inner membrane. The catalysed reaction is 4 Fe(II)-[cytochrome c] + O2 + 8 H(+)(in) = 4 Fe(III)-[cytochrome c] + 2 H2O + 4 H(+)(out). Component of the cytochrome c oxidase, the last enzyme in the mitochondrial electron transport chain which drives oxidative phosphorylation. The respiratory chain contains 3 multisubunit complexes succinate dehydrogenase (complex II, CII), ubiquinol-cytochrome c oxidoreductase (cytochrome b-c1 complex, complex III, CIII) and cytochrome c oxidase (complex IV, CIV), that cooperate to transfer electrons derived from NADH and succinate to molecular oxygen, creating an electrochemical gradient over the inner membrane that drives transmembrane transport and the ATP synthase. Cytochrome c oxidase is the component of the respiratory chain that catalyzes the reduction of oxygen to water. Electrons originating from reduced cytochrome c in the intermembrane space (IMS) are transferred via the dinuclear copper A center (CU(A)) of subunit 2 and heme A of subunit 1 to the active site in subunit 1, a binuclear center (BNC) formed by heme A3 and copper B (CU(B)). The BNC reduces molecular oxygen to 2 water molecules using 4 electrons from cytochrome c in the IMS and 4 protons from the mitochondrial matrix. This is Cytochrome c oxidase subunit 2 (MT-CO2) from Tamias townsendii (Townsend's chipmunk).